The chain runs to 489 residues: Acetyl-coenzyme A carboxylase carboxyl transferase subunit beta, chloroplastic (489 aa).

Residues 225 to 489 (LWIQCDNCYG…FFPLNKNEIK (265 aa)) form the CoA carboxyltransferase N-terminal domain. Residues cysteine 229, cysteine 232, cysteine 245, and cysteine 248 each contribute to the Zn(2+) site. The C4-type zinc-finger motif lies at 229–248 (CDNCYGLKYKKVEMNVCEEC).

Belongs to the AccD/PCCB family. As to quaternary structure, acetyl-CoA carboxylase is a heterohexamer composed of biotin carboxyl carrier protein, biotin carboxylase and 2 subunits each of ACCase subunit alpha and ACCase plastid-coded subunit beta (accD). The cofactor is Zn(2+).

It localises to the plastid. The protein resides in the chloroplast stroma. It carries out the reaction N(6)-carboxybiotinyl-L-lysyl-[protein] + acetyl-CoA = N(6)-biotinyl-L-lysyl-[protein] + malonyl-CoA. The protein operates within lipid metabolism; malonyl-CoA biosynthesis; malonyl-CoA from acetyl-CoA: step 1/1. In terms of biological role, component of the acetyl coenzyme A carboxylase (ACC) complex. Biotin carboxylase (BC) catalyzes the carboxylation of biotin on its carrier protein (BCCP) and then the CO(2) group is transferred by the transcarboxylase to acetyl-CoA to form malonyl-CoA. In Brassica napus (Rape), this protein is Acetyl-coenzyme A carboxylase carboxyl transferase subunit beta, chloroplastic.